The following is a 194-amino-acid chain: Peptidyl-tRNA hydrolase (194 aa).

Tyr-16 is a tRNA binding site. The Proton acceptor role is filled by His-21. TRNA is bound by residues Phe-67, Asn-69, and Asn-115.

It belongs to the PTH family. Monomer.

The protein localises to the cytoplasm. The catalysed reaction is an N-acyl-L-alpha-aminoacyl-tRNA + H2O = an N-acyl-L-amino acid + a tRNA + H(+). Hydrolyzes ribosome-free peptidyl-tRNAs (with 1 or more amino acids incorporated), which drop off the ribosome during protein synthesis, or as a result of ribosome stalling. Its function is as follows. Catalyzes the release of premature peptidyl moieties from peptidyl-tRNA molecules trapped in stalled 50S ribosomal subunits, and thus maintains levels of free tRNAs and 50S ribosomes. This chain is Peptidyl-tRNA hydrolase, found in Escherichia fergusonii (strain ATCC 35469 / DSM 13698 / CCUG 18766 / IAM 14443 / JCM 21226 / LMG 7866 / NBRC 102419 / NCTC 12128 / CDC 0568-73).